The following is a 354-amino-acid chain: Endo-1,4-beta-xylanase 1 (354 aa).

The GH10 domain maps to 19-339 (SGLDAAMKAA…KPSYTSSLNT (321 aa)). A glycan (N-linked (GlcNAc...) asparagine) is linked at Asn117. Glu147 serves as the catalytic Proton donor. Glu261 serves as the catalytic Nucleophile. An intrachain disulfide couples Cys289 to Cys295.

Belongs to the glycosyl hydrolase 10 (cellulase F) family.

It localises to the secreted. The catalysed reaction is Endohydrolysis of (1-&gt;4)-beta-D-xylosidic linkages in xylans.. The protein operates within glycan degradation; xylan degradation. In terms of biological role, endo-1,4-beta-xylanase involved in the hydrolysis of xylan, a major structural heterogeneous polysaccharide found in plant biomass representing the second most abundant polysaccharide in the biosphere, after cellulose. Plays an important role in causing fusarium head blight (FHB) on cereal crops. The polypeptide is Endo-1,4-beta-xylanase 1 (XYL1) (Gibberella zeae (strain ATCC MYA-4620 / CBS 123657 / FGSC 9075 / NRRL 31084 / PH-1) (Wheat head blight fungus)).